The primary structure comprises 525 residues: Acetyl-CoA hydrolase (525 aa).

280–284 (GIGNI) serves as a coordination point for CoA. The active-site 5-glutamyl coenzyme A thioester intermediate is the Glu305. CoA-binding residues include Asn395 and Gly399.

This sequence belongs to the acetyl-CoA hydrolase/transferase family.

Its subcellular location is the cytoplasm. The enzyme catalyses acetyl-CoA + H2O = acetate + CoA + H(+). Functionally, required for utilization of acetate. The sequence is that of Acetyl-CoA hydrolase (acu-8) from Neurospora crassa (strain ATCC 24698 / 74-OR23-1A / CBS 708.71 / DSM 1257 / FGSC 987).